We begin with the raw amino-acid sequence, 764 residues long: Complement factor B (764 aa).

An N-terminal signal peptide occupies residues 1–25; sequence MGSNLSPQLCLMPFILGLLSGGVTT. Sushi domains are found at residues 35 to 100, 101 to 160, and 163 to 220; these read GSCS…ECRA, IHCP…ICDN, and GYCS…SCQD. 6 disulfide bridges follow: cysteine 37-cysteine 76, cysteine 62-cysteine 98, cysteine 103-cysteine 145, cysteine 131-cysteine 158, cysteine 165-cysteine 205, and cysteine 191-cysteine 218. Asparagine 122 and asparagine 142 each carry an N-linked (GlcNAc...) asparagine glycan. Residues 270 to 469 enclose the VWFA domain; it reads NIYLVLDGSD…NLEDVFFQMI (200 aa). Mg(2+) is bound by residues serine 278 and serine 280. An N-linked (GlcNAc...) asparagine glycan is attached at asparagine 285. Threonine 353 is a binding site for Mg(2+). Asparagine 378 carries N-linked (GlcNAc...) asparagine glycosylation. One can recognise a Peptidase S1 domain in the interval 477–757; it reads LCGMVWEHRK…VLPWLKQKLQ (281 aa). Cystine bridges form between cysteine 478-cysteine 596, cysteine 511-cysteine 527, cysteine 599-cysteine 615, cysteine 656-cysteine 682, and cysteine 695-cysteine 725. Residues histidine 526 and aspartate 576 each act as charge relay system in the active site. The Charge relay system role is filled by serine 699.

The protein belongs to the peptidase S1 family. In terms of assembly, monomer. Interacts with complement C3b; this interaction is dependent on the presence of Mg(2+). Catalytic component of the C3 convertase of the alternative complement pathway, also named C3bBb, composed of complement factor B Bb and complement C3b. Catalytic component of the C5 convertase of the alternative complement pathway, also named C3bBb3b, composed of complement factor B Bb and additional molecules of complement C3b. Interacts to CFP; this interaction contributes to the stabilization of the active C3-convertase enzyme complex. Mg(2+) serves as cofactor. Requires Mn(2+) as cofactor. In terms of processing, cleaved by CFD following activation of the alternative complement system, generating Ba and Bb chains. Cleavage and activation takes place when CFB is already associated with complement C3b.

The protein localises to the secreted. Its subcellular location is the cell surface. It catalyses the reaction Cleavage of Arg-|-Ser bond in complement component C3 alpha-chain to yield C3a and C3b, and Arg-|-Xaa bond in complement component C5 alpha-chain to yield C5a and C5b.. Its function is as follows. Precursor of the catalytic component of the C3 and C5 convertase complexes of the alternative pathway of the complement system, a cascade of proteins that leads to phagocytosis and breakdown of pathogens and signaling that strengthens the adaptive immune system. The alternative complement pathway acts as an amplification loop that enhances other complement pathways (classical, lectin and GZMK) by promoting formation of additional C3 and C5 convertases. CFB is cleaved and activated by CFD to generate Ba and Bb chains; Bb chain constituting the catalytic component of the C3 and C5 convertases. Serine protease component of the complement C3 and C5 convertase complexes of the alternative complement pathway. Following cleavage and activation by factor D (CFD), forms the C3 convertase together with complement C3b. As part of the C3 convertase, cleaves and activates C3 into C3a anaphylatoxin and C3b opsonin, the next components of the complement pathways. When an additional complement C3b molecule binds to the C3 convertase, forms the C5 convertase, which cleaves and activates C5 into C5a anaphylatoxin and C5b component of the membrane attack complex. In terms of biological role, involved in proliferation and differentiation of preactivated B-lymphocytes, rapid spreading of peripheral blood monocytes, stimulation of lymphocyte blastogenesis and lysis of erythrocytes. The protein is Complement factor B (CFB) of Pongo pygmaeus (Bornean orangutan).